Reading from the N-terminus, the 130-residue chain is Large ribosomal subunit protein uL22 (130 aa).

This sequence belongs to the universal ribosomal protein uL22 family. Part of the 50S ribosomal subunit.

Its function is as follows. This protein binds specifically to 23S rRNA; its binding is stimulated by other ribosomal proteins, e.g. L4, L17, and L20. It is important during the early stages of 50S assembly. It makes multiple contacts with different domains of the 23S rRNA in the assembled 50S subunit and ribosome. In terms of biological role, the globular domain of the protein is located near the polypeptide exit tunnel on the outside of the subunit, while an extended beta-hairpin is found that lines the wall of the exit tunnel in the center of the 70S ribosome. The protein is Large ribosomal subunit protein uL22 of Clavibacter sepedonicus (Clavibacter michiganensis subsp. sepedonicus).